The following is a 207-amino-acid chain: Small ribosomal subunit protein uS4 (207 aa).

A disordered region spans residues 31-56; that stretch reads KCKLDSKPGQHGRTSGARTSDYGNQL. Residues 42-53 show a composition bias toward polar residues; the sequence is GRTSGARTSDYG. Residues 97 to 157 form the S4 RNA-binding domain; it reads TRLDNVVYRM…EKSKKQVRIV (61 aa).

It belongs to the universal ribosomal protein uS4 family. In terms of assembly, part of the 30S ribosomal subunit. Contacts protein S5. The interaction surface between S4 and S5 is involved in control of translational fidelity.

Its function is as follows. One of the primary rRNA binding proteins, it binds directly to 16S rRNA where it nucleates assembly of the body of the 30S subunit. With S5 and S12 plays an important role in translational accuracy. This Herminiimonas arsenicoxydans protein is Small ribosomal subunit protein uS4.